A 275-amino-acid chain; its full sequence is Type III pantothenate kinase (275 aa).

Position 6–13 (6–13 (DAGNTNIV)) interacts with ATP. Substrate is bound at residue 108-111 (GADR). Catalysis depends on D110, which acts as the Proton acceptor. Residue D130 participates in K(+) binding. T133 lines the ATP pocket. Residue T187 participates in substrate binding.

The protein belongs to the type III pantothenate kinase family. Homodimer. NH4(+) serves as cofactor. K(+) is required as a cofactor.

The protein localises to the cytoplasm. It catalyses the reaction (R)-pantothenate + ATP = (R)-4'-phosphopantothenate + ADP + H(+). Its pathway is cofactor biosynthesis; coenzyme A biosynthesis; CoA from (R)-pantothenate: step 1/5. In terms of biological role, catalyzes the phosphorylation of pantothenate (Pan), the first step in CoA biosynthesis. This chain is Type III pantothenate kinase, found in Zymomonas mobilis subsp. mobilis (strain ATCC 31821 / ZM4 / CP4).